The chain runs to 837 residues: AdoMet-dependent rRNA methyltransferase SPB1 (837 aa).

S-adenosyl-L-methionine-binding residues include Gly-58, Trp-60, Asp-78, Asp-94, and Asp-119. The active-site Proton acceptor is the Lys-159. The stretch at 345–390 (LNEEEQIEKELRDLQEKQKQKQKREKRRKNEEKQKELTRMQMNMLT) forms a coiled coil. 4 disordered regions span residues 359 to 381 (QEKQ…QKEL), 483 to 529 (FRAK…DEDD), 573 to 644 (TDDV…TTKE), and 779 to 808 (TKKQ…KGIK). The segment covering 372–381 (RKNEEKQKEL) has biased composition (basic and acidic residues). Residues 518–529 (ESDDSELSDEDD) show a composition bias toward acidic residues. The span at 593-602 (SYNEMKKEDL) shows a compositional bias: basic and acidic residues. Acidic residues predominate over residues 603–635 (SDSSDEDSSSESDFEIVANDESDGDIDSDYDSD).

It belongs to the class I-like SAM-binding methyltransferase superfamily. RNA methyltransferase RlmE family. SPB1 subfamily. As to quaternary structure, component of the nucleolar and nucleoplasmic pre-60S ribosomal particle.

Its subcellular location is the nucleus. The protein resides in the nucleolus. The catalysed reaction is a ribonucleotide in rRNA + S-adenosyl-L-methionine = a 2'-O-methylribonucleotide in rRNA + S-adenosyl-L-homocysteine + H(+). In terms of biological role, required for proper assembly of pre-ribosomal particles during the biogenesis of the 60S ribosomal subunit. This is AdoMet-dependent rRNA methyltransferase SPB1 from Candida glabrata (strain ATCC 2001 / BCRC 20586 / JCM 3761 / NBRC 0622 / NRRL Y-65 / CBS 138) (Yeast).